The primary structure comprises 903 residues: Protein translocase subunit SecA (903 aa).

Residues glutamine 89, 107–111, and aspartate 502 each bind ATP; that span reads GEGKT. Positions 886, 888, 897, and 898 each coordinate Zn(2+).

It belongs to the SecA family. In terms of assembly, monomer and homodimer. Part of the essential Sec protein translocation apparatus which comprises SecA, SecYEG and auxiliary proteins SecDF-YajC and YidC. It depends on Zn(2+) as a cofactor.

The protein localises to the cell inner membrane. It localises to the cytoplasm. It catalyses the reaction ATP + H2O + cellular proteinSide 1 = ADP + phosphate + cellular proteinSide 2.. In terms of biological role, part of the Sec protein translocase complex. Interacts with the SecYEG preprotein conducting channel. Has a central role in coupling the hydrolysis of ATP to the transfer of proteins into and across the cell membrane, serving both as a receptor for the preprotein-SecB complex and as an ATP-driven molecular motor driving the stepwise translocation of polypeptide chains across the membrane. This Rhizobium meliloti (strain 1021) (Ensifer meliloti) protein is Protein translocase subunit SecA.